A 59-amino-acid polypeptide reads, in one-letter code: Cuticle protein 7 isoform a (59 aa).

Q1 is subject to Pyrrolidone carboxylic acid.

This chain is Cuticle protein 7 isoform a, found in Limulus polyphemus (Atlantic horseshoe crab).